The sequence spans 358 residues: Histidinol-phosphate aminotransferase (358 aa).

Lys211 bears the N6-(pyridoxal phosphate)lysine mark.

It belongs to the class-II pyridoxal-phosphate-dependent aminotransferase family. Histidinol-phosphate aminotransferase subfamily. In terms of assembly, homodimer. Pyridoxal 5'-phosphate serves as cofactor.

It carries out the reaction L-histidinol phosphate + 2-oxoglutarate = 3-(imidazol-4-yl)-2-oxopropyl phosphate + L-glutamate. It participates in amino-acid biosynthesis; L-histidine biosynthesis; L-histidine from 5-phospho-alpha-D-ribose 1-diphosphate: step 7/9. This is Histidinol-phosphate aminotransferase from Blochmanniella pennsylvanica (strain BPEN).